The sequence spans 385 residues: D-alanyl-D-alanine-carboxypeptidase/endopeptidase AmpH (385 aa).

The signal sequence occupies residues 1-21 (MKRSLLFSAVLCAASLTSVHA).

The protein belongs to the beta-lactamase family.

The protein localises to the cell inner membrane. With respect to regulation, inhibited by cefmetazole. Hydrolyzes the cross-linked dimers tetrapentapeptide (D45) and tetratetrapeptide (D44). Removes the terminal D-alanine from muropeptides and disaccharide pentapeptide M5 with a C-terminal D-Ala-D-Ala dipeptide. Associated with recycling and remodeling of peptidoglycan (PG). This Escherichia coli O157:H7 protein is D-alanyl-D-alanine-carboxypeptidase/endopeptidase AmpH (ampH).